Consider the following 380-residue polypeptide: Cytochrome b (380 aa).

The next 4 helical transmembrane spans lie at 34–54 (FGSL…LLAM), 78–99 (WLIR…YLHI), 114–134 (WNTG…GYVL), and 179–199 (FFAL…IHLT). Residues H84 and H98 each coordinate heme b. Heme b is bound by residues H183 and H197. An a ubiquinone-binding site is contributed by H202. The next 4 membrane-spanning stretches (helical) occupy residues 227–247 (TKDI…AMFA), 289–309 (LGGV…PFLH), 321–341 (LSQL…WIGS), and 348–368 (FIIT…ILFP).

This sequence belongs to the cytochrome b family. As to quaternary structure, the cytochrome bc1 complex contains 11 subunits: 3 respiratory subunits (MT-CYB, CYC1 and UQCRFS1), 2 core proteins (UQCRC1 and UQCRC2) and 6 low-molecular weight proteins (UQCRH/QCR6, UQCRB/QCR7, UQCRQ/QCR8, UQCR10/QCR9, UQCR11/QCR10 and a cleavage product of UQCRFS1). This cytochrome bc1 complex then forms a dimer. Heme b is required as a cofactor.

The protein localises to the mitochondrion inner membrane. In terms of biological role, component of the ubiquinol-cytochrome c reductase complex (complex III or cytochrome b-c1 complex) that is part of the mitochondrial respiratory chain. The b-c1 complex mediates electron transfer from ubiquinol to cytochrome c. Contributes to the generation of a proton gradient across the mitochondrial membrane that is then used for ATP synthesis. The chain is Cytochrome b (MT-CYB) from Aphanotriccus audax (Black-billed flycatcher).